Consider the following 151-residue polypeptide: Transcriptional regulator MraZ (151 aa).

SpoVT-AbrB domains follow at residues 5-56 and 85-128; these read THRH…PLPT and SEEL…DAAR.

It belongs to the MraZ family. In terms of assembly, forms oligomers.

The protein localises to the cytoplasm. It localises to the nucleoid. In Acidithiobacillus ferrooxidans (strain ATCC 23270 / DSM 14882 / CIP 104768 / NCIMB 8455) (Ferrobacillus ferrooxidans (strain ATCC 23270)), this protein is Transcriptional regulator MraZ.